We begin with the raw amino-acid sequence, 158 residues long: NAD(P)H-quinone oxidoreductase subunit J, chloroplastic (158 aa).

Belongs to the complex I 30 kDa subunit family. As to quaternary structure, NDH is composed of at least 16 different subunits, 5 of which are encoded in the nucleus.

It localises to the plastid. The protein resides in the chloroplast thylakoid membrane. It carries out the reaction a plastoquinone + NADH + (n+1) H(+)(in) = a plastoquinol + NAD(+) + n H(+)(out). The catalysed reaction is a plastoquinone + NADPH + (n+1) H(+)(in) = a plastoquinol + NADP(+) + n H(+)(out). Its function is as follows. NDH shuttles electrons from NAD(P)H:plastoquinone, via FMN and iron-sulfur (Fe-S) centers, to quinones in the photosynthetic chain and possibly in a chloroplast respiratory chain. The immediate electron acceptor for the enzyme in this species is believed to be plastoquinone. Couples the redox reaction to proton translocation, and thus conserves the redox energy in a proton gradient. The polypeptide is NAD(P)H-quinone oxidoreductase subunit J, chloroplastic (Capsella bursa-pastoris (Shepherd's purse)).